An 864-amino-acid chain; its full sequence is MTQDLSKHTPMMAQYLQLKAQNPDILLFYRMGDFYELFYDDAKKAAALLDISLTKRGASAGEPIPMAGVPYHAVEGYLAKLVSLGESVAICEQIGDPATSKGPVERKVVRIVTPGTVSDEALLPERQDNLVAAIYEEKGVFAIATLDMTSGRFLITELPNKEALAAELQRLLPAEILYAEDFSAAEILNNYKGLRRRPVWEFELVTAINLLNRQFGTQSLAGFGVEKAVVALCAAGCVLHYAQETQRTALPHINSIHLAQNSDTVLLDAATRRNLELTQNLAGGTENTLAAVLDKCVTPMGSRLLKRWIHQPIRDLEKLKKRQDIIDTLQKEQRIELLQPLLQNVGDMERILARVALRSARPRDLTRLRTALAQLPDIAKNAKNLTASLDALVAQIGDFSELHALLERAIIETPPQLIRDGGVIAEGYNAELDEWRELSAGATQYLENLEIREREATGIDTLKIGFNAVHGYYIQISQGQAHKAPMHYVRRQTLKNAERYIIPELKTYEDKVLKAKGASLALEKQLYDELFDLLMPRLGEMQLAAMALSELDVLTNLAERAESLNYVRPTFSLQRGVNIKGGRHPVVEQVLKDPFIANPVFLNAQRHLLVVTGPNMGGKSTYMRQIALISLMAYIGSFVPADSAEIGALDRIFTRIGASDDLASGRSTFMVEMTEMANILHQATENSLVLIDEIGRGTSTYDGLSLAWACAEWLAKKTQSLTLFATHYFELTSLPSQLKGVANVHLDAREHQDSIVFMHSVQEGAASKSYGLAVAALAGVPKQVIQLAKQRLAHLEEISLQTKEAHDNPQGDLLFAADLQETPQIQPLVAQQSELEKALMSIDPDELTPRQALEALYRLKKLMA.

613 to 620 (GPNMGGKS) provides a ligand contact to ATP.

The protein belongs to the DNA mismatch repair MutS family.

In terms of biological role, this protein is involved in the repair of mismatches in DNA. It is possible that it carries out the mismatch recognition step. This protein has a weak ATPase activity. This Actinobacillus pleuropneumoniae serotype 7 (strain AP76) protein is DNA mismatch repair protein MutS.